The following is a 218-amino-acid chain: ETS domain-containing protein ets-7 (218 aa).

Residues 12–93 (QRLLNFLRGL…KGKDSRYCFL (82 aa)) constitute a DNA-binding region (ETS). A compositionally biased stretch (low complexity) spans 131-161 (TSNFSLQSSPSSSSNSSSARTMSATSSPTSS). The disordered stretch occupies residues 131–162 (TSNFSLQSSPSSSSNSSSARTMSATSSPTSSL).

The protein belongs to the ETS family.

The protein localises to the nucleus. Probable transcription factor. Involved in responses to oxidative stress. The sequence is that of ETS domain-containing protein ets-7 from Caenorhabditis elegans.